A 188-amino-acid polypeptide reads, in one-letter code: MGEMTSGVDGHGSTKRTTSEAQKMDFNTDRGSAIPTGDDRGYQCGVIGDSVRFSVFTGYDAADVSIPKISSPGSAGFDLSVLEDREFIRGCHYRLPTGLAIAVPRGYVGIITPRSSQAKNFVSTGIIDSDFRGHIHIMVSAIADFSVKKNQRIAQLVVTPCLTQSEVVPYETLERTRRGTGGFGSSGQ.

The tract at residues 1-34 (MGEMTSGVDGHGSTKRTTSEAQKMDFNTDRGSAI) is disordered.

The protein belongs to the dUTPase family. Mg(2+) serves as cofactor.

The enzyme catalyses dUTP + H2O = dUMP + diphosphate + H(+). Its function is as follows. This enzyme is involved in nucleotide metabolism: it produces dUMP, the immediate precursor of thymidine nucleotides and it decreases the intracellular concentration of dUTP so that uracil cannot be incorporated into DNA. The polypeptide is Deoxyuridine 5'-triphosphate nucleotidohydrolase (49) (Ictaluridae (bullhead catfishes)).